We begin with the raw amino-acid sequence, 378 residues long: Lipoyl synthase, mitochondrial (378 aa).

7 residues coordinate [4Fe-4S] cluster: cysteine 97, cysteine 102, cysteine 108, cysteine 128, cysteine 132, cysteine 135, and serine 343. Positions 111-332 (GSDKSAATAT…RQRALDMGFL (222 aa)) constitute a Radical SAM core domain.

Belongs to the radical SAM superfamily. Lipoyl synthase family. The cofactor is [4Fe-4S] cluster.

The protein localises to the mitochondrion. It catalyses the reaction [[Fe-S] cluster scaffold protein carrying a second [4Fe-4S](2+) cluster] + N(6)-octanoyl-L-lysyl-[protein] + 2 oxidized [2Fe-2S]-[ferredoxin] + 2 S-adenosyl-L-methionine + 4 H(+) = [[Fe-S] cluster scaffold protein] + N(6)-[(R)-dihydrolipoyl]-L-lysyl-[protein] + 4 Fe(3+) + 2 hydrogen sulfide + 2 5'-deoxyadenosine + 2 L-methionine + 2 reduced [2Fe-2S]-[ferredoxin]. It participates in protein modification; protein lipoylation via endogenous pathway; protein N(6)-(lipoyl)lysine from octanoyl-[acyl-carrier-protein]: step 2/2. Catalyzes the radical-mediated insertion of two sulfur atoms into the C-6 and C-8 positions of the octanoyl moiety bound to the lipoyl domains of lipoate-dependent enzymes, thereby converting the octanoylated domains into lipoylated derivatives. This chain is Lipoyl synthase, mitochondrial, found in Phaeosphaeria nodorum (strain SN15 / ATCC MYA-4574 / FGSC 10173) (Glume blotch fungus).